The following is a 355-amino-acid chain: UDP-N-acetylglucosamine--N-acetylmuramyl-(pentapeptide) pyrophosphoryl-undecaprenol N-acetylglucosamine transferase (355 aa).

UDP-N-acetyl-alpha-D-glucosamine contacts are provided by residues 11 to 13, Arg-164, Ser-194, and Gln-289; that span reads TAG.

The protein belongs to the glycosyltransferase 28 family. MurG subfamily.

It localises to the cell membrane. It carries out the reaction di-trans,octa-cis-undecaprenyl diphospho-N-acetyl-alpha-D-muramoyl-L-alanyl-D-glutamyl-meso-2,6-diaminopimeloyl-D-alanyl-D-alanine + UDP-N-acetyl-alpha-D-glucosamine = di-trans,octa-cis-undecaprenyl diphospho-[N-acetyl-alpha-D-glucosaminyl-(1-&gt;4)]-N-acetyl-alpha-D-muramoyl-L-alanyl-D-glutamyl-meso-2,6-diaminopimeloyl-D-alanyl-D-alanine + UDP + H(+). Its pathway is cell wall biogenesis; peptidoglycan biosynthesis. Cell wall formation. Catalyzes the transfer of a GlcNAc subunit on undecaprenyl-pyrophosphoryl-MurNAc-pentapeptide (lipid intermediate I) to form undecaprenyl-pyrophosphoryl-MurNAc-(pentapeptide)GlcNAc (lipid intermediate II). The polypeptide is UDP-N-acetylglucosamine--N-acetylmuramyl-(pentapeptide) pyrophosphoryl-undecaprenol N-acetylglucosamine transferase (Lachnoclostridium phytofermentans (strain ATCC 700394 / DSM 18823 / ISDg) (Clostridium phytofermentans)).